The sequence spans 302 residues: Ribosomal RNA small subunit methyltransferase H (302 aa).

S-adenosyl-L-methionine contacts are provided by residues 34–36 (AGH), Asp53, Phe80, Asp101, and Gln108. The interval 283-302 (LEENPRSKSAKMRVLKKIER) is disordered. A compositionally biased stretch (basic residues) spans 290-302 (KSAKMRVLKKIER).

It belongs to the methyltransferase superfamily. RsmH family.

The protein localises to the cytoplasm. It catalyses the reaction cytidine(1402) in 16S rRNA + S-adenosyl-L-methionine = N(4)-methylcytidine(1402) in 16S rRNA + S-adenosyl-L-homocysteine + H(+). Specifically methylates the N4 position of cytidine in position 1402 (C1402) of 16S rRNA. This is Ribosomal RNA small subunit methyltransferase H from Mycoplasma mobile (strain ATCC 43663 / 163K / NCTC 11711) (Mesomycoplasma mobile).